Here is a 160-residue protein sequence, read N- to C-terminus: Putative flagellin YvzB (160 aa).

It belongs to the bacterial flagellin family. Interacts with FliW.

The protein resides in the bacterial flagellum. The chain is Putative flagellin YvzB (yvzB) from Bacillus subtilis (strain 168).